We begin with the raw amino-acid sequence, 897 residues long: Valine--tRNA ligase (897 aa).

The short motif at 46–56 (PNVTGSLHMGH) is the 'HIGH' region element. The 'KMSKS' region signature appears at 532 to 536 (KMSKT). ATP is bound at residue K535. The stretch at 839–897 (LRRSLEKLDKESGVLAARLDNASYLANAPAELVTESRAKLAEQRAQAAILAEQLARLEN) forms a coiled coil.

It belongs to the class-I aminoacyl-tRNA synthetase family. ValS type 1 subfamily. Monomer.

The protein resides in the cytoplasm. The enzyme catalyses tRNA(Val) + L-valine + ATP = L-valyl-tRNA(Val) + AMP + diphosphate. Functionally, catalyzes the attachment of valine to tRNA(Val). As ValRS can inadvertently accommodate and process structurally similar amino acids such as threonine, to avoid such errors, it has a 'posttransfer' editing activity that hydrolyzes mischarged Thr-tRNA(Val) in a tRNA-dependent manner. This Gloeobacter violaceus (strain ATCC 29082 / PCC 7421) protein is Valine--tRNA ligase.